Reading from the N-terminus, the 1594-residue chain is Mucin-like protein (1594 aa).

Over 1–1530 (DTTAGPDTTS…YETREDGLEM (1530 aa)) the chain is Extracellular. TSP type-1 domains follow at residues 141–196 (DGGF…GSCP), 198–253 (DGNF…PPCP), and 255–310 (DGNF…GPCP). 9 cysteine pairs are disulfide-bonded: C153–C190, C157–C195, C168–C180, C210–C247, C214–C252, C225–C237, C267–C304, C271–C309, and C282–C294. Positions 400 to 566 (LTISDDAFEQ…GVWFFRLEMN (167 aa)) constitute an NIDO domain. One can recognise an AMOP domain in the interval 568–706 (ILSLAGKKCN…RSCFGYTLRR (139 aa)). The region spanning 706 to 901 (RRGLIFGDPH…KWQINASQSL (196 aa)) is the VWFD domain. 2 consecutive EGF-like domains span residues 1063 to 1108 (LILL…QYCQ) and 1110 to 1156 (KIDA…SICE). Cystine bridges form between C1067-C1075, C1069-C1096, C1098-C1107, C1114-C1127, C1121-C1141, C1144-C1155, C1161-C1173, C1169-C1182, C1285-C1296, C1292-C1305, C1307-C1320, C1326-C1341, C1334-C1350, and C1352-C1363. The region spanning 1157 to 1191 (DIDECSDANVSKCDHSCINLPGSYVCDCNQGFSLE) is the EGF-like 3; calcium-binding domain. The EGF-like 4; calcium-binding domain maps to 1281–1321 (DINECTTHRHKCSQICHNLDGSYTCSCQPGFNLSPDQTTCE). Residues 1322–1364 (DIDECGLINEAHCEGSLEICINTMGSFRCECQDGFHRVNDTCQ) form the EGF-like 5; calcium-binding domain. A helical transmembrane segment spans residues 1531–1551 (IWLLVGVSVAVAVPLMIVIVI). At 1552–1593 (LYREYRRIAKQRRKTNNFDLRQWSGARERTIYSGFTNSKSAR) the chain is on the cytoplasmic side.

In terms of tissue distribution, component of the acid-insoluble and acid-soluble organic matrix of the aragonitic skeleton (at protein level).

The protein resides in the membrane. The chain is Mucin-like protein from Acropora millepora (Staghorn coral).